Consider the following 95-residue polypeptide: Aspartyl/glutamyl-tRNA(Asn/Gln) amidotransferase subunit C (95 aa).

This sequence belongs to the GatC family. Heterotrimer of A, B and C subunits.

It catalyses the reaction L-glutamyl-tRNA(Gln) + L-glutamine + ATP + H2O = L-glutaminyl-tRNA(Gln) + L-glutamate + ADP + phosphate + H(+). The catalysed reaction is L-aspartyl-tRNA(Asn) + L-glutamine + ATP + H2O = L-asparaginyl-tRNA(Asn) + L-glutamate + ADP + phosphate + 2 H(+). Its function is as follows. Allows the formation of correctly charged Asn-tRNA(Asn) or Gln-tRNA(Gln) through the transamidation of misacylated Asp-tRNA(Asn) or Glu-tRNA(Gln) in organisms which lack either or both of asparaginyl-tRNA or glutaminyl-tRNA synthetases. The reaction takes place in the presence of glutamine and ATP through an activated phospho-Asp-tRNA(Asn) or phospho-Glu-tRNA(Gln). The chain is Aspartyl/glutamyl-tRNA(Asn/Gln) amidotransferase subunit C from Prosthecochloris aestuarii (strain DSM 271 / SK 413).